Reading from the N-terminus, the 604-residue chain is uncharacterized protein (604 aa).

This sequence belongs to the glycosyltransferase 2 family.

This is an uncharacterized protein from Rickettsia conorii (strain ATCC VR-613 / Malish 7).